Here is a 294-residue protein sequence, read N- to C-terminus: MSELITTPVETTAKAELVSLAKLGEMRTHVGMVKRYWNPKMGFFIEPERKHNNDHFVLELQRQSLQTAYNYVKEVAQNNGQILFVGTKNDYVKKLVNNIAKRVDVAFITQRWLGGTLTNFKTLSISINKLNKLVEKQAENAADLTKKENLMLSREIERLEKFFGGVKSLKRLPNLLIVDDPVYEKNAVAEANILRIPVVALCNTNTNPELVDFIIPANNHQPQSTCLLMNLLADAVAEAKAMPTMFAYKPDEEIQIEIPQKQEAPRQVVNRANSKQITSQRLNITRNPEVLTRE.

This sequence belongs to the universal ribosomal protein uS2 family.

The polypeptide is Small ribosomal subunit protein uS2 (rpsB) (Mycoplasma pneumoniae (strain ATCC 29342 / M129 / Subtype 1) (Mycoplasmoides pneumoniae)).